Reading from the N-terminus, the 411-residue chain is Dual-specificity RNA methyltransferase RlmN (411 aa).

Glu-125 serves as the catalytic Proton acceptor. Residues 131–380 (EEGRGTLCIS…IRTPRGRDIL (250 aa)) form the Radical SAM core domain. A disulfide bond links Cys-138 and Cys-383. [4Fe-4S] cluster is bound by residues Cys-145, Cys-149, and Cys-152. S-adenosyl-L-methionine-binding positions include 209-210 (GE), Ser-241, 263-265 (SLH), and Asn-340. Cys-383 functions as the S-methylcysteine intermediate in the catalytic mechanism.

The protein belongs to the radical SAM superfamily. RlmN family. Requires [4Fe-4S] cluster as cofactor.

The protein localises to the cytoplasm. It catalyses the reaction adenosine(2503) in 23S rRNA + 2 reduced [2Fe-2S]-[ferredoxin] + 2 S-adenosyl-L-methionine = 2-methyladenosine(2503) in 23S rRNA + 5'-deoxyadenosine + L-methionine + 2 oxidized [2Fe-2S]-[ferredoxin] + S-adenosyl-L-homocysteine. It carries out the reaction adenosine(37) in tRNA + 2 reduced [2Fe-2S]-[ferredoxin] + 2 S-adenosyl-L-methionine = 2-methyladenosine(37) in tRNA + 5'-deoxyadenosine + L-methionine + 2 oxidized [2Fe-2S]-[ferredoxin] + S-adenosyl-L-homocysteine. Specifically methylates position 2 of adenine 2503 in 23S rRNA and position 2 of adenine 37 in tRNAs. m2A2503 modification seems to play a crucial role in the proofreading step occurring at the peptidyl transferase center and thus would serve to optimize ribosomal fidelity. This is Dual-specificity RNA methyltransferase RlmN from Brucella canis (strain ATCC 23365 / NCTC 10854 / RM-666).